The primary structure comprises 45 residues: MTSGNNINQPVTYPIFTVRWLAVHTLGVPTVFFLGAIAAMQFIHR.

The helical transmembrane segment at 20–36 (WLAVHTLGVPTVFFLGA) threads the bilayer. His-24 lines the heme pocket.

It belongs to the PsbE/PsbF family. Heterodimer of an alpha subunit and a beta subunit. PSII is composed of 1 copy each of membrane proteins PsbA, PsbB, PsbC, PsbD, PsbE, PsbF, PsbH, PsbI, PsbJ, PsbK, PsbL, PsbM, PsbT, PsbX, PsbY, PsbZ, Psb30/Ycf12, peripheral proteins PsbO, CyanoQ (PsbQ), PsbU, PsbV and a large number of cofactors. It forms dimeric complexes. Heme b serves as cofactor.

The protein resides in the cellular thylakoid membrane. In terms of biological role, this b-type cytochrome is tightly associated with the reaction center of photosystem II (PSII). PSII is a light-driven water:plastoquinone oxidoreductase that uses light energy to abstract electrons from H(2)O, generating O(2) and a proton gradient subsequently used for ATP formation. It consists of a core antenna complex that captures photons, and an electron transfer chain that converts photonic excitation into a charge separation. The polypeptide is Cytochrome b559 subunit beta (Nostoc punctiforme (strain ATCC 29133 / PCC 73102)).